A 162-amino-acid chain; its full sequence is Endoribonuclease YbeY (162 aa).

Zn(2+)-binding residues include His118, His122, and His128.

Belongs to the endoribonuclease YbeY family. It depends on Zn(2+) as a cofactor.

The protein resides in the cytoplasm. In terms of biological role, single strand-specific metallo-endoribonuclease involved in late-stage 70S ribosome quality control and in maturation of the 3' terminus of the 16S rRNA. This chain is Endoribonuclease YbeY, found in Glaesserella parasuis serovar 5 (strain SH0165) (Haemophilus parasuis).